The primary structure comprises 680 residues: 1-deoxy-D-xylulose-5-phosphate synthase (680 aa).

Residues 1–17 (MQQSPHSPQSQSLSASA) show a composition bias toward low complexity. Residues 1 to 20 (MQQSPHSPQSQSLSASAVDS) form a disordered region. Thiamine diphosphate-binding positions include histidine 113 and 154–156 (GHS). Residue aspartate 185 participates in Mg(2+) binding. Residues 186-187 (GA), asparagine 214, phenylalanine 323, and glutamate 408 contribute to the thiamine diphosphate site. Asparagine 214 contributes to the Mg(2+) binding site.

The protein belongs to the transketolase family. DXPS subfamily. Homodimer. Requires Mg(2+) as cofactor. The cofactor is thiamine diphosphate.

The catalysed reaction is D-glyceraldehyde 3-phosphate + pyruvate + H(+) = 1-deoxy-D-xylulose 5-phosphate + CO2. Its pathway is metabolic intermediate biosynthesis; 1-deoxy-D-xylulose 5-phosphate biosynthesis; 1-deoxy-D-xylulose 5-phosphate from D-glyceraldehyde 3-phosphate and pyruvate: step 1/1. Functionally, catalyzes the acyloin condensation reaction between C atoms 2 and 3 of pyruvate and glyceraldehyde 3-phosphate to yield 1-deoxy-D-xylulose-5-phosphate (DXP). This is 1-deoxy-D-xylulose-5-phosphate synthase from Psychrobacter cryohalolentis (strain ATCC BAA-1226 / DSM 17306 / VKM B-2378 / K5).